The sequence spans 248 residues: MDIPRIFTISESEHRIHNPFTEEKYATLGRVLRMKPGTRILDLGSGSGEMLCTWARDHGITGTGIDMSSLFTAQAKRRAEELGVSERVHFIHNDAAGYVANEKCDVAACVGATWIAGGFAGAEELLAQSLKPGGIMLIGEPYWRQLPATEEIAQACGVSSTSDFLTLPGLVGAFDDLGYDVVEMVLADQEGWDRYEAAKWLTMRRWLEANPDDDFAAEVRAELNIAPKRYVTYARECFGWGVFALIAR.

The helical transmembrane segment at 104 to 122 (CDVAACVGATWIAGGFAGA) threads the bilayer.

The protein resides in the membrane. This is an uncharacterized protein from Escherichia coli (strain K12).